Here is a 180-residue protein sequence, read N- to C-terminus: Putative phycocyanobilin lyase CpcS 2 (180 aa).

Belongs to the CpcS/CpeS biliprotein lyase family.

In terms of biological role, covalently attaches a chromophore to Cys residue(s) of phycobiliproteins (Potential). In vitro does not act as a chromophore lyase for ApcA1, ApcA2, ApcB, ApcD, ApcF, CpcB or PecB, the lyase activity is therefore unsure. The sequence is that of Putative phycocyanobilin lyase CpcS 2 (cpeS2) from Nostoc sp. (strain PCC 7120 / SAG 25.82 / UTEX 2576).